Consider the following 221-residue polypeptide: Zingipain-2 (221 aa).

Disulfide bonds link C24–C65 and C58–C98. Residue C27 is part of the active site. N-linked (GlcNAc...) asparagine glycosylation is found at N99 and N156. A disulfide bridge connects residues C155 and C206. H161 is an active-site residue.

Belongs to the peptidase C1 family.

The catalysed reaction is Preferential cleavage of peptides with a proline residue at the P2 position.. Cysteine proteinase with a specific activity toward peptides with a proline residue at the P2 position. The chain is Zingipain-2 from Zingiber officinale (Ginger).